The primary structure comprises 162 residues: MMKPKRLLSLLLRLIAVGATLAAVIIMATSHEKGTFFAVSYEAKYTDTPAFKYFVIANAIVTVYGFLVLFHPPGSPLWRLVLALDLVFTMLLISSISAALAVAQVGKNGNSRAGWLPVCGQVTKYCNQVTGALVAGLIALITYIILLLHSIYTFLNPLLEKA.

The Cytoplasmic segment spans residues Met1–Arg6. A helical membrane pass occupies residues Leu7–Met27. Topologically, residues Ala28–Pro49 are extracellular. A helical membrane pass occupies residues Ala50 to Phe70. The Cytoplasmic segment spans residues His71–Arg79. A helical transmembrane segment spans residues Leu80 to Leu100. Over Ala101 to Thr130 the chain is Extracellular. A helical membrane pass occupies residues Gly131–Ile151. At Tyr152–Ala162 the chain is on the cytoplasmic side.

This sequence belongs to the Casparian strip membrane proteins (CASP) family. Homodimer and heterodimers.

It localises to the cell membrane. This is CASP-like protein 1C2 from Populus trichocarpa (Western balsam poplar).